The sequence spans 590 residues: Pentatricopeptide repeat-containing protein At2g46050, mitochondrial (590 aa).

Residues 1–109 (MRFTFLRSTR…RNIVTWNILI (109 aa)) constitute a mitochondrion transit peptide. PPR repeat units follow at residues 141–175 (DHVS…GLES), 176–206 (SCFP…VLDR), 207–241 (DLVL…KNRF), 244–266 (DYFT…IHAI), 275–305 (DIPV…MVVR), 306–340 (NVVS…NLQP), 341–375 (DELT…GSAD), 376–406 (FLSV…IREP), 407–437 (DLVS…MLQK), 441–471 (DKIT…MTEF), and 477–507 (EDEH…MPTE). The type E motif stretch occupies residues 512 to 588 (ALAAFTGGCN…TPGCSWLGDY (77 aa)).

Belongs to the PPR family. PCMP-E subfamily.

The protein localises to the mitochondrion. The protein is Pentatricopeptide repeat-containing protein At2g46050, mitochondrial (PCMP-E39) of Arabidopsis thaliana (Mouse-ear cress).